A 401-amino-acid chain; its full sequence is Keratin-associated protein 10-4 (401 aa).

Tandem repeats lie at residues 36 to 40 (CCEPP), 41 to 45 (CCAPS), 46 to 50 (CCAPA), 67 to 71 (CCPVT), 89 to 93 (CCQQS), 99 to 103 (CCASS), 109 to 113 (CCVPV), 114 to 118 (CCKTV), 119 to 123 (CCKPV), 124 to 128 (CCVPV), 129 to 133 (CCGDS), 135 to 139 (CCQQS), 145 to 149 (CCTSS), 155 to 159 (CCVPI), 160 to 164 (CCKPV), 172 to 176 (CCQQS), 186 to 190 (CCQAV), 208 to 212 (CCQQS), 218 to 222 (CCTSS), 228 to 232 (CCVPV), 233 to 237 (CCKTV), 238 to 242 (CCKPV), 250 to 254 (CCQQS), 270 to 274 (CCVPV), 275 to 279 (CCKPV), 280 to 284 (CCKPV), 297 to 301 (CCQQS), 307 to 311 (CCTSS), 317 to 321 (CCVPV), 322 to 326 (CCKPV), 339 to 343 (CCQQS), 349 to 353 (CCTTS), 354 to 358 (CCRPS), 373 to 377 (CCVPV), and 391 to 395 (CCRPA). Positions 36 to 395 (CCEPPCCAPS…SCQPSCCRPA (360 aa)) are 36 X 5 AA repeats of C-C-X(3).

The protein belongs to the KRTAP type 10 family. Interacts with hair keratins. In terms of tissue distribution, restricted to hair root, not detected in any other tissues.

Functionally, in the hair cortex, hair keratin intermediate filaments are embedded in an interfilamentous matrix, consisting of hair keratin-associated proteins (KRTAP), which are essential for the formation of a rigid and resistant hair shaft through their extensive disulfide bond cross-linking with abundant cysteine residues of hair keratins. The matrix proteins include the high-sulfur and high-glycine-tyrosine keratins. The protein is Keratin-associated protein 10-4 (KRTAP10-4) of Homo sapiens (Human).